Consider the following 451-residue polypeptide: Phosphoglucosamine mutase (451 aa).

The Phosphoserine intermediate role is filled by serine 103. Positions 103, 243, 245, and 247 each coordinate Mg(2+). Phosphoserine is present on serine 103.

Belongs to the phosphohexose mutase family. Requires Mg(2+) as cofactor. In terms of processing, activated by phosphorylation.

The catalysed reaction is alpha-D-glucosamine 1-phosphate = D-glucosamine 6-phosphate. Functionally, catalyzes the conversion of glucosamine-6-phosphate to glucosamine-1-phosphate. The polypeptide is Phosphoglucosamine mutase (Lactobacillus johnsonii (strain CNCM I-12250 / La1 / NCC 533)).